A 399-amino-acid chain; its full sequence is Endo-1,4-beta-xylanase C (399 aa).

Residues 1-20 form the signal peptide; that stretch reads MFKFSASLAALAALVPFVAA. Residues 21-56 form the CBM1 domain; the sequence is QSPEWGQCGGIGWTGPTTCVAGTTCVESNPYYSQCL. Residues 81–396 form the GH10 domain; sequence SAKLHTLAKA…KPAFNGIAAG (316 aa). The Proton donor role is filled by Glu-212. The Nucleophile role is filled by Glu-318. Cysteines 346 and 352 form a disulfide.

Belongs to the glycosyl hydrolase 10 (cellulase F) family.

The protein resides in the secreted. It carries out the reaction Endohydrolysis of (1-&gt;4)-beta-D-xylosidic linkages in xylans.. It functions in the pathway glycan degradation; xylan degradation. Its function is as follows. Endo-1,4-beta-xylanase involved in the hydrolysis of xylan, a major structural heterogeneous polysaccharide found in plant biomass representing the second most abundant polysaccharide in the biosphere, after cellulose. This is Endo-1,4-beta-xylanase C (xynC) from Phanerodontia chrysosporium (White-rot fungus).